Reading from the N-terminus, the 177-residue chain is Bifunctional protein PyrR (177 aa).

The PRPP-binding motif lies at 97-109 (IILVDDVLYTGRT).

This sequence belongs to the purine/pyrimidine phosphoribosyltransferase family. PyrR subfamily.

It carries out the reaction UMP + diphosphate = 5-phospho-alpha-D-ribose 1-diphosphate + uracil. Regulates the transcription of the pyrimidine nucleotide (pyr) operon in response to exogenous pyrimidines. In terms of biological role, also displays a weak uracil phosphoribosyltransferase activity which is not physiologically significant. The chain is Bifunctional protein PyrR from Nitrosococcus oceani (strain ATCC 19707 / BCRC 17464 / JCM 30415 / NCIMB 11848 / C-107).